The chain runs to 224 residues: Ribose-5-phosphate isomerase A (224 aa).

Residues 32–35, 85–88, and 98–101 each bind substrate; these read TGST, DGAD, and KGGG. Catalysis depends on Glu-107, which acts as the Proton acceptor. Residue Lys-125 participates in substrate binding.

This sequence belongs to the ribose 5-phosphate isomerase family. In terms of assembly, homodimer.

It carries out the reaction aldehydo-D-ribose 5-phosphate = D-ribulose 5-phosphate. It participates in carbohydrate degradation; pentose phosphate pathway; D-ribose 5-phosphate from D-ribulose 5-phosphate (non-oxidative stage): step 1/1. Functionally, catalyzes the reversible conversion of ribose-5-phosphate to ribulose 5-phosphate. The sequence is that of Ribose-5-phosphate isomerase A from Pseudomonas putida (strain ATCC 700007 / DSM 6899 / JCM 31910 / BCRC 17059 / LMG 24140 / F1).